Consider the following 406-residue polypeptide: Kelch domain-containing protein 1 (406 aa).

6 Kelch repeats span residues 24–76 (FLYV…CGAC), 80–134 (KLYI…VYKD), 135–181 (RLIY…TKTQ), 208–258 (KGYI…PIAD), 260–307 (KLFL…ACLG), and 311–361 (EIMV…LESQ).

As to quaternary structure, component of a CRL5 E3 ubiquitin-protein ligase complex, also named ECS (Elongin BC-CUL2/5-SOCS-box protein) complex, composed of CUL5, Elongin BC (ELOB and ELOC), RBX1 and substrate-specific adapter KLHDC1. As to expression, widely expressed, with high levels in skeletal muscle, pancreas and liver. Undetectable in peripheral blood leukocytes.

It localises to the cytoplasm. It is found in the cytosol. It functions in the pathway protein modification; protein ubiquitination. Functionally, substrate-recognition component of a Cul5-RING (CRL5) E3 ubiquitin-protein ligase complex of the DesCEND (destruction via C-end degrons) pathway, which recognizes a C-degron located at the extreme C terminus of target proteins, leading to their ubiquitination and degradation. The C-degron recognized by the DesCEND pathway is usually a motif of less than ten residues and can be present in full-length proteins, truncated proteins or proteolytically cleaved forms. The CRL5(KLHDC1) complex mediates ubiquitination and degradation of truncated SELENOS selenoprotein produced by failed UGA/Sec decoding, which ends with a glycine. This chain is Kelch domain-containing protein 1, found in Homo sapiens (Human).